We begin with the raw amino-acid sequence, 54 residues long: Ovomucoid (54 aa).

The Kazal-like domain occupies 4-54 (VDCSEYPKPACTLEYRPLCGSDSKTYGNKCNFCNAVVESNGTLTLSHFGKC). 3 cysteine pairs are disulfide-bonded: Cys-6/Cys-36, Cys-14/Cys-33, and Cys-22/Cys-54. The N-linked (GlcNAc...) asparagine glycan is linked to Asn-43.

It is found in the secreted. The protein is Ovomucoid of Alectoris chukar (Chukar partridge).